A 116-amino-acid polypeptide reads, in one-letter code: Large ribosomal subunit protein bL17 (116 aa).

It belongs to the bacterial ribosomal protein bL17 family. Part of the 50S ribosomal subunit. Contacts protein L32.

The protein is Large ribosomal subunit protein bL17 of Dictyoglomus thermophilum (strain ATCC 35947 / DSM 3960 / H-6-12).